Consider the following 336-residue polypeptide: Aldo-keto reductase str7 (336 aa).

Aspartate 57 is a binding site for NADP(+). Tyrosine 62 (proton donor) is an active-site residue. Residue histidine 124 coordinates substrate. NADP(+) is bound by residues 154-155 (SE), glutamine 174, 206-220 (SPLG…YKSP), and 283-291 (KKIKYLEEN).

Belongs to the aldo/keto reductase family. Aldo/keto reductase 2 subfamily.

Its pathway is mycotoxin biosynthesis. Functionally, aldo-keto reductase; part of the gene cluster that mediates the biosynthesis of strobilurin A, an antifungal polyketide that contains a key beta-methoxyacrylate toxophore that targets the complex III of the mitochondrial electron transport chain. Strobilurin biosynthesis begins with construction of benzoyl CoA by step-wise elimination of ammonia from phenylalanine by the phenylalanine ammonia-lyase str11, oxygenation by str8 and retro-Claisen reaction to form benzoic acid, which is activated to its CoA thiolester benzoyl CoA by the dedicated CoA ligase str10. Benzoyl CoA forms the starter unit for the highly reducing polyketide synthase stpks1 that produces the polyketide prestrobilutin A. The FAD-dependent oxygenase str9 then catalyzes the key oxidative rearrangement responsible for the creation of the beta-methoxyacrylate toxophore. Str9 performs epoxidation of the 2,3 olefin of prestrobilutin A, followed by Meinwald rearrangement to furnish the aldehyde intermediate. Rapid enolization of the aldehyde intermediate would give the beta-methoxyacrylate skeleton and methylations catalyzed by str2 and str3 complete the synthesis and lead to the production of strobilurin A. The short-chain dehydrogenase stl2 and the dehydrogenase str4 play a role in the shunt pathway leading to the production of bolineol. The cluster encodes no obvious halogenase gene that could be involved in production of strobilurin B, nor any obvious dimethylallyl-transferase that could be involved in the production of strobilurin G. It is possible that unknown proteins encoded in, or near, the cluster (such as str1 or stl1) may form new classes of halogenases or dimethylally-transferases, or that the responsible genes are located elsewhere on the genome. Similarly, proteins encoded by str5/str6 hydrolases appear to have no chemical role in the biosynthesis of strobilurin A. Finally, no obvious self-resistance gene is found within the cluster. This chain is Aldo-keto reductase str7, found in Strobilurus tenacellus.